We begin with the raw amino-acid sequence, 433 residues long: uncharacterized protein (433 aa).

Positions 1–28 (MKICGLEKFRVFLSLISMVSLLCNGVNG) are cleaved as a signal peptide. The Extracellular segment spans residues 29–274 (FTIVRSMAVN…QAELEPKKTG (246 aa)). The segment covering 235 to 250 (GENANPTANSGTSARS) has biased composition (polar residues). The disordered stretch occupies residues 235–266 (GENANPTANSGTSARSNRNEQNKMEEPARNQA). Residues 251–266 (NRNEQNKMEEPARNQA) show a composition bias toward basic and acidic residues. Residues 275–295 (VVVAGVTVSLAAGFVLALATL) traverse the membrane as a helical segment. Over 296–433 (LLMKKKQTSL…HDKGTDEDKG (138 aa)) the chain is Cytoplasmic. 2 disordered regions span residues 320-340 (EEPV…PSFD) and 413-433 (KVIE…EDKG).

In terms of tissue distribution, component of the acid-insoluble and acid-soluble organic matrix of the aragonitic skeleton (at protein level).

The protein resides in the membrane. This is an uncharacterized protein from Acropora millepora (Staghorn coral).